We begin with the raw amino-acid sequence, 466 residues long: Asparagine--tRNA ligase (466 aa).

Belongs to the class-II aminoacyl-tRNA synthetase family. As to quaternary structure, homodimer.

It is found in the cytoplasm. It carries out the reaction tRNA(Asn) + L-asparagine + ATP = L-asparaginyl-tRNA(Asn) + AMP + diphosphate + H(+). In Yersinia pseudotuberculosis serotype O:1b (strain IP 31758), this protein is Asparagine--tRNA ligase.